A 264-amino-acid chain; its full sequence is Proliferating cell nuclear antigen (264 aa).

A DNA-binding region spans residues 61–80 (RCDRNLAMGINMTSMAKIMK).

It belongs to the PCNA family. In terms of assembly, homotrimer. Forms a complex with activator 1 heteropentamer in the presence of ATP.

It is found in the nucleus. In terms of biological role, this protein is an auxiliary protein of DNA polymerase delta and is involved in the control of eukaryotic DNA replication by increasing the polymerase's processibility during elongation of the leading strand. This is Proliferating cell nuclear antigen (PCNA) from Styela clava (Sea squirt).